Reading from the N-terminus, the 234-residue chain is Immune-associated nucleotide-binding protein 2 (234 aa).

Residues K21–K223 form the AIG1-type G domain. Residues G30–T38, S51, and N183 contribute to the GTP site.

This sequence belongs to the TRAFAC class TrmE-Era-EngA-EngB-Septin-like GTPase superfamily. AIG1/Toc34/Toc159-like paraseptin GTPase family. IAN subfamily. Mostly expressed in pollen. Also detected in lateral roots and radicles.

The chain is Immune-associated nucleotide-binding protein 2 from Arabidopsis thaliana (Mouse-ear cress).